Here is a 481-residue protein sequence, read N- to C-terminus: Aspartyl/glutamyl-tRNA(Asn/Gln) amidotransferase subunit B (481 aa).

Positions 29–50 are disordered; the sequence is SSSKSSHTDPKNTNISPIDLGH.

This sequence belongs to the GatB/GatE family. GatB subfamily. As to quaternary structure, heterotrimer of A, B and C subunits.

It catalyses the reaction L-glutamyl-tRNA(Gln) + L-glutamine + ATP + H2O = L-glutaminyl-tRNA(Gln) + L-glutamate + ADP + phosphate + H(+). The catalysed reaction is L-aspartyl-tRNA(Asn) + L-glutamine + ATP + H2O = L-asparaginyl-tRNA(Asn) + L-glutamate + ADP + phosphate + 2 H(+). In terms of biological role, allows the formation of correctly charged Asn-tRNA(Asn) or Gln-tRNA(Gln) through the transamidation of misacylated Asp-tRNA(Asn) or Glu-tRNA(Gln) in organisms which lack either or both of asparaginyl-tRNA or glutaminyl-tRNA synthetases. The reaction takes place in the presence of glutamine and ATP through an activated phospho-Asp-tRNA(Asn) or phospho-Glu-tRNA(Gln). The sequence is that of Aspartyl/glutamyl-tRNA(Asn/Gln) amidotransferase subunit B from Malacoplasma penetrans (strain HF-2) (Mycoplasma penetrans).